Consider the following 219-residue polypeptide: N-(5'-phosphoribosyl)anthranilate isomerase (219 aa).

It belongs to the TrpF family.

The catalysed reaction is N-(5-phospho-beta-D-ribosyl)anthranilate = 1-(2-carboxyphenylamino)-1-deoxy-D-ribulose 5-phosphate. Its pathway is amino-acid biosynthesis; L-tryptophan biosynthesis; L-tryptophan from chorismate: step 3/5. This Chloroherpeton thalassium (strain ATCC 35110 / GB-78) protein is N-(5'-phosphoribosyl)anthranilate isomerase.